The following is a 267-amino-acid chain: 2-keto-3-deoxy-L-rhamnonate aldolase (267 aa).

Residue His-49 is the Proton acceptor of the active site. Gln-151 serves as a coordination point for substrate. Position 153 (Glu-153) interacts with Mg(2+). Ala-178 and Asp-179 together coordinate substrate. A Mg(2+)-binding site is contributed by Asp-179.

Belongs to the HpcH/HpaI aldolase family. KDR aldolase subfamily. Homohexamer. It depends on Mg(2+) as a cofactor.

It catalyses the reaction 2-dehydro-3-deoxy-L-rhamnonate = (S)-lactaldehyde + pyruvate. Its function is as follows. Catalyzes the reversible retro-aldol cleavage of 2-keto-3-deoxy-L-rhamnonate (KDR) to pyruvate and lactaldehyde. This Salmonella gallinarum (strain 287/91 / NCTC 13346) protein is 2-keto-3-deoxy-L-rhamnonate aldolase.